A 170-amino-acid polypeptide reads, in one-letter code: Der GTPase-activating protein YihI (170 aa).

Disordered regions lie at residues 1–96 (MKKP…LSPQ) and 145–170 (LSYD…RGGN). Over residues 20–30 (TREELNQEARD) the composition is skewed to basic and acidic residues. The span at 31–40 (RKRLKKHRGH) shows a compositional bias: basic residues. The segment covering 147–159 (YDDEEDEEEDEKQ) has biased composition (acidic residues).

Belongs to the YihI family. As to quaternary structure, interacts with Der.

In terms of biological role, a GTPase-activating protein (GAP) that modifies Der/EngA GTPase function. May play a role in ribosome biogenesis. The sequence is that of Der GTPase-activating protein YihI from Salmonella arizonae (strain ATCC BAA-731 / CDC346-86 / RSK2980).